We begin with the raw amino-acid sequence, 358 residues long: MSHSVEYIIQHIPPVDTSLAGAAQAHLDNLTKPRGSLGRLEELALRLYCIQGGDTPLAADPARIYTIAGDHGVAAEGVSPFPQEVTRQMVLNFLSNGAGINVLCNTVGCEQFVVDAGSCGGAYPEHPRLIQRKIHPGTASIAQGPAMTAEQCRQALQLGIDLAGMAREAGCRTVGTGEMGISNTTPSTALYCAYLGLDPAGITGPGAGITPDLVKHKTDIIRRALAVNAGAVQSQNAVDILAALGGYEIAALTGLILGAAYHRMAVLVDGFISTAAWTAAWKICPAVSDYSFFSHASAEAGHKTALRSMGIEPLHDLGLRLGEGTGAALTLFLLRSAAAIFNDMATFSSAGVATQSSC.

E323 functions as the Proton acceptor in the catalytic mechanism.

Belongs to the CobT family.

The enzyme catalyses 5,6-dimethylbenzimidazole + nicotinate beta-D-ribonucleotide = alpha-ribazole 5'-phosphate + nicotinate + H(+). The protein operates within nucleoside biosynthesis; alpha-ribazole biosynthesis; alpha-ribazole from 5,6-dimethylbenzimidazole: step 1/2. Functionally, catalyzes the synthesis of alpha-ribazole-5'-phosphate from nicotinate mononucleotide (NAMN) and 5,6-dimethylbenzimidazole (DMB). The polypeptide is Nicotinate-nucleotide--dimethylbenzimidazole phosphoribosyltransferase (Oleidesulfovibrio alaskensis (strain ATCC BAA-1058 / DSM 17464 / G20) (Desulfovibrio alaskensis)).